The primary structure comprises 388 residues: Chorismate synthase (388 aa).

Residues Arg39 and Arg45 each contribute to the NADP(+) site. Residues Arg130 to Ser132, Asn251 to Ala252, Ala296, Lys311 to Thr315, and Arg337 each bind FMN.

It belongs to the chorismate synthase family. Homotetramer. FMNH2 is required as a cofactor.

It catalyses the reaction 5-O-(1-carboxyvinyl)-3-phosphoshikimate = chorismate + phosphate. It participates in metabolic intermediate biosynthesis; chorismate biosynthesis; chorismate from D-erythrose 4-phosphate and phosphoenolpyruvate: step 7/7. Functionally, catalyzes the anti-1,4-elimination of the C-3 phosphate and the C-6 proR hydrogen from 5-enolpyruvylshikimate-3-phosphate (EPSP) to yield chorismate, which is the branch point compound that serves as the starting substrate for the three terminal pathways of aromatic amino acid biosynthesis. This reaction introduces a second double bond into the aromatic ring system. The polypeptide is Chorismate synthase (Streptococcus equi subsp. zooepidemicus (strain MGCS10565)).